The chain runs to 259 residues: Flap endonuclease Xni (259 aa).

Residue Asp-109 coordinates Mg(2+). A 5'-3' exonuclease domain is found at 165–255; sequence VKPQQLSDYW…FNLQDLRFTA (91 aa). Residues Leu-176, Ile-187, and Ile-190 each coordinate K(+). Positions 189-194 are interaction with DNA; the sequence is GIGPKA.

It belongs to the Xni family. Mg(2+) is required as a cofactor. K(+) serves as cofactor.

In terms of biological role, has flap endonuclease activity. During DNA replication, flap endonucleases cleave the 5'-overhanging flap structure that is generated by displacement synthesis when DNA polymerase encounters the 5'-end of a downstream Okazaki fragment. This chain is Flap endonuclease Xni, found in Vibrio vulnificus (strain CMCP6).